A 460-amino-acid polypeptide reads, in one-letter code: Lysosomal proton-coupled steroid conjugate and bile acid symporter SLC46A3 (460 aa).

A signal peptide spans 1-25; sequence MKISFIEPAILLNAFAMTLTIPLTA. Over 26 to 73 the chain is Extracellular; sequence QYVYRRIWEETGNYTFASNSNGSECDQNKSSSIFAFREEVQKKASLFN. 3 N-linked (GlcNAc...) asparagine glycosylation sites follow: asparagine 38, asparagine 46, and asparagine 53. A helical transmembrane segment spans residues 74–94; the sequence is LQVEMSALIPGLVSTFMLLAS. Over 95–111 the chain is Cytoplasmic; that stretch reads SDNHGRKLPMVLSSLGS. A helical membrane pass occupies residues 112–132; the sequence is LGTNTWLCMMSYFDLPLQLLI. Topologically, residues 133–135 are extracellular; that stretch reads AST. The chain crosses the membrane as a helical span at residues 136–156; that stretch reads FIGALFGNYTTFWGACFAYIV. Residues 157–170 lie on the Cytoplasmic side of the membrane; that stretch reads DQQKEYKHRIIRIA. The chain crosses the membrane as a helical span at residues 171 to 191; it reads ILDFMLGVVTGLTGLSSGYFI. The Extracellular segment spans residues 192–195; the sequence is RELG. A helical membrane pass occupies residues 196-216; sequence FVWSYFITAMVLIVNLAYILF. The Cytoplasmic segment spans residues 217–257; it reads FLNDPIKESSSQIVTMSCIESLKDLFYRTYMLFKNGSSKRQ. A helical membrane pass occupies residues 258–278; sequence ALLCLLIFTLVIYFFVIIGIS. At 279–301 the chain is on the extracellular side; that stretch reads PIFTLYELGPPLCWNEVYIGYGS. Residues 302 to 322 form a helical membrane-spanning segment; it reads ALGSVSFLSSFLGIWLFSYCL. Residues 323–324 are Cytoplasmic-facing; the sequence is KD. The chain crosses the membrane as a helical span at residues 325 to 345; it reads IHIAYIGIFTTMVGMTLAAFT. Topologically, residues 346 to 347 are extracellular; it reads RT. Residues 348-368 traverse the membrane as a helical segment; sequence TLMMFLVRIPFIFTIMPLSVL. The Cytoplasmic segment spans residues 369–381; that stretch reads RSMLSKVVHSTEQ. The chain crosses the membrane as a helical span at residues 382 to 402; that stretch reads GALFACIAFLETLAGVTSTSA. The Extracellular portion of the chain corresponds to 403 to 410; it reads YSGIYSAT. Residues 411-431 traverse the membrane as a helical segment; the sequence is VAWYPGFIFLLSAGLLVLPAI. At 432-460 the chain is on the cytoplasmic side; it reads SLCCVKSIGWEEGSYTLLVHEEPSEHTSD. Residues 446-449 carry the Tyrosine-based lysosomal-sorting motif motif; sequence YTLL.

It belongs to the major facilitator superfamily. SLC46A family. In terms of tissue distribution, expressed in liver, kidney, small intestine and colon.

Its subcellular location is the lysosome membrane. The catalysed reaction is estrone 3-sulfate(out) + n H(+)(out) = estrone 3-sulfate(in) + n H(+)(in). The enzyme catalyses 25-hydroxyvitamin D3 sulfate(out) + n H(+)(out) = 25-hydroxyvitamin D3 sulfate(in) + n H(+)(in). It carries out the reaction cholate(out) + n H(+)(out) = cholate(in) + n H(+)(in). It catalyses the reaction glycocholate(out) + n H(+)(out) = glycocholate(in) + n H(+)(in). The catalysed reaction is taurocholate(out) + n H(+)(out) = taurocholate(in) + n H(+)(in). The enzyme catalyses dehydroepiandrosterone 3-sulfate(out) + n H(+)(out) = dehydroepiandrosterone 3-sulfate(in) + n H(+)(in). It carries out the reaction N-acetyl-D-muramoyl-L-alanyl-D-isoglutamine(out) + n H(+)(out) = N-acetyl-D-muramoyl-L-alanyl-D-isoglutamine(in) + n H(+)(in). It catalyses the reaction 2',3'-cGAMP(out) + n H(+)(out) = 2',3'-cGAMP(in) + n H(+)(in). Lysosomal proton-coupled steroid conjugate and bile acid transporter. Preferentially recognizes lipophilic steroid conjugates or bile acis as endogenous substrates and seems to mediate escape from lysosomes to the cytoplasm. Modulates hepatic cytosolic copper homeostasis, maybe acting as a lysosomal copper transporter and sequestering copper ions in the lysosome. Delivers pathogen-associated molecular patterns to cytosolic pattern recognition receptors as part of the innate immune response to microbes. Selectively transports bacterial muramyl dipeptide (MDP) into the cytosol for recognition by NOD2, triggering inflammatory responses. Likely acts as a redundant importer of cyclic GMP-AMP dinucleotides (cGAMPs) in monocyte and macrophage cell lineages. The transport mechanism, its electrogenicity and stoichiometry remain to be elucidated. This is Lysosomal proton-coupled steroid conjugate and bile acid symporter SLC46A3 (Slc46a3) from Mus musculus (Mouse).